Consider the following 64-residue polypeptide: Large ribosomal subunit protein uL30 (64 aa).

It belongs to the universal ribosomal protein uL30 family. Part of the 50S ribosomal subunit.

This chain is Large ribosomal subunit protein uL30, found in Bradyrhizobium diazoefficiens (strain JCM 10833 / BCRC 13528 / IAM 13628 / NBRC 14792 / USDA 110).